The following is a 610-amino-acid chain: Dopamine beta-hydroxylase (610 aa).

Residues 1–9 (MQVPSPSVR) lie on the Cytoplasmic side of the membrane. The helical; Signal-anchor for type II membrane protein transmembrane segment at 10-30 (EAASMYGTAVAVFLVILVAAL) threads the bilayer. Over 31–610 (QGSAPAESPF…TVLNISGGKG (580 aa)) the chain is Intragranular. The 117-residue stretch at 50–166 (GTLELSWNIS…GTVHLVYGFL (117 aa)) folds into the DOMON domain. 6 disulfides stabilise this stretch: Cys147–Cys589, Cys225–Cys276, Cys262–Cys288, Cys383–Cys496, Cys387–Cys558, and Cys459–Cys481. The N-linked (GlcNAc...) asparagine glycan is linked to Asn177. Tyr223 is an active-site residue. Residues His255 and His256 each coordinate Cu(2+). Cu(2+) is bound by residues His326, His405, His407, and Met480. Residue His405 is part of the active site. Residue Asn559 is glycosylated (N-linked (GlcNAc...) asparagine). The segment at 585–610 (PTPHCPASQAQSPAGPTVLNISGGKG) is disordered.

This sequence belongs to the copper type II ascorbate-dependent monooxygenase family. As to quaternary structure, homotetramer; composed of two disulfide-linked dimers. Requires Cu(2+) as cofactor. Post-translationally, proteolytic cleavage after the membrane-anchor leads to the release of the soluble form. In terms of processing, N-glycosylated. In terms of tissue distribution, detected in chromaffin granules in the adrenal medulla (at protein level). Detected in adrenal medulla.

The protein localises to the cytoplasmic vesicle. It localises to the secretory vesicle lumen. The protein resides in the secretory vesicle. It is found in the chromaffin granule lumen. Its subcellular location is the secretory vesicle membrane. The protein localises to the chromaffin granule membrane. It catalyses the reaction dopamine + 2 L-ascorbate + O2 = (R)-noradrenaline + 2 monodehydro-L-ascorbate radical + H2O. The protein operates within catecholamine biosynthesis; (R)-noradrenaline biosynthesis; (R)-noradrenaline from dopamine: step 1/1. Catalyzes the hydroxylation of dopamine to noradrenaline (also known as norepinephrine), and is thus vital for regulation of these neurotransmitters. The chain is Dopamine beta-hydroxylase (DBH) from Bos taurus (Bovine).